The primary structure comprises 147 residues: UPF0306 protein YhbP (147 aa).

It belongs to the UPF0306 family.

The protein is UPF0306 protein YhbP of Escherichia coli O1:K1 / APEC.